Here is a 505-residue protein sequence, read N- to C-terminus: ATP synthase subunit alpha (505 aa).

Residue 169–176 (GDRQIGKT) coordinates ATP.

Belongs to the ATPase alpha/beta chains family. F-type ATPases have 2 components, CF(1) - the catalytic core - and CF(0) - the membrane proton channel. CF(1) has five subunits: alpha(3), beta(3), gamma(1), delta(1), epsilon(1). CF(0) has three main subunits: a(1), b(2) and c(9-12). The alpha and beta chains form an alternating ring which encloses part of the gamma chain. CF(1) is attached to CF(0) by a central stalk formed by the gamma and epsilon chains, while a peripheral stalk is formed by the delta and b chains.

Its subcellular location is the cell inner membrane. It catalyses the reaction ATP + H2O + 4 H(+)(in) = ADP + phosphate + 5 H(+)(out). Its function is as follows. Produces ATP from ADP in the presence of a proton gradient across the membrane. The alpha chain is a regulatory subunit. This is ATP synthase subunit alpha from Desulfatibacillum aliphaticivorans.